Here is a 230-residue protein sequence, read N- to C-terminus: Protein CWC15 homolog B (230 aa).

The tract at residues 1–126 (MTTAARPTFE…DEDSDDDTAA (126 aa)) is disordered. Over residues 22 to 34 (DLSQLSKQYSSRD) the composition is skewed to polar residues. The span at 52 to 84 (EEVRSRDFRRELEERERVAVRDKNRDRPTREHT) shows a compositional bias: basic and acidic residues. Acidic residues predominate over residues 102 to 124 (DADDPLTDEDADEDSDEDSDDDT). The stretch at 121-165 (DDDTAALLAELEKIKKERAEEQVRKELEQKAEEERIRMENILSGN) forms a coiled coil.

The protein belongs to the CWC15 family. Identified in the spliceosome C complex. Component of the minor spliceosome, which splices U12-type introns.

It is found in the nucleus. In terms of biological role, involved in pre-mRNA splicing as component of the spliceosome. In Xenopus laevis (African clawed frog), this protein is Protein CWC15 homolog B (cwc15-b).